Here is a 357-residue protein sequence, read N- to C-terminus: Probable butyrate kinase 1 (357 aa).

Belongs to the acetokinase family.

Its subcellular location is the cytoplasm. It catalyses the reaction butanoate + ATP = butanoyl phosphate + ADP. This Caldanaerobacter subterraneus subsp. tengcongensis (strain DSM 15242 / JCM 11007 / NBRC 100824 / MB4) (Thermoanaerobacter tengcongensis) protein is Probable butyrate kinase 1.